Reading from the N-terminus, the 308-residue chain is Olfactory receptor 4E2 (308 aa).

At Met-1–Glu-24 the chain is on the extracellular side. Asn-5 carries an N-linked (GlcNAc...) asparagine glycan. A helical membrane pass occupies residues Ile-25 to Ile-45. Residues Val-46–Asn-57 lie on the Cytoplasmic side of the membrane. The chain crosses the membrane as a helical span at residues Pro-58 to Val-78. Residues Pro-79–Cys-97 lie on the Extracellular side of the membrane. The cysteines at positions 97 and 179 are disulfide-linked. A helical transmembrane segment spans residues Ile-98–Met-118. His-105 and Cys-109 together coordinate Cu cation. At Ala-119–Gln-143 the chain is on the cytoplasmic side. The chain crosses the membrane as a helical span at residues Leu-144–Ile-164. Residues Arg-165–Gly-204 lie on the Extracellular side of the membrane. The chain crosses the membrane as a helical span at residues Thr-205–Leu-225. The Cytoplasmic portion of the chain corresponds to Arg-226 to Ala-236. A helical transmembrane segment spans residues Leu-237–Leu-257. At Tyr-258–Asp-268 the chain is on the extracellular side. Arg-260 contributes to the Cu cation binding site. The chain crosses the membrane as a helical span at residues Lys-269 to Leu-289. Topologically, residues Arg-290 to Ser-308 are cytoplasmic.

This sequence belongs to the G-protein coupled receptor 1 family. In terms of tissue distribution, expressed in olfactory epithelium, specifically in the olfactory sensory neurons of the septal organ.

It is found in the cell membrane. Its activity is regulated as follows. Copper binding enhances receptor activity in response to odorant binding. Olfactory receptor that is activated by the binding of organosulfur odorants with thioether groups such as (methylthio)methanethiol (MTMT) and bis(methylthiomethyl) disulfide. Also binds odorants cis-cyclooctene and tert-butyl mercaptan. The activity of this receptor is mediated by G proteins which activate adenylyl cyclase (Potential). In Mus musculus (Mouse), this protein is Olfactory receptor 4E2.